A 387-amino-acid polypeptide reads, in one-letter code: tRNA-specific 2-thiouridylase MnmA (387 aa).

ATP is bound by residues 6-13 (AMSGGVDS) and leucine 32. Catalysis depends on cysteine 101, which acts as the Nucleophile. Cysteine 101 and cysteine 199 form a disulfide bridge. Glycine 125 provides a ligand contact to ATP. Residues 148 to 150 (KDQ) are interaction with tRNA. Residue cysteine 199 is the Cysteine persulfide intermediate of the active site.

The protein belongs to the MnmA/TRMU family.

The protein resides in the cytoplasm. It catalyses the reaction S-sulfanyl-L-cysteinyl-[protein] + uridine(34) in tRNA + AH2 + ATP = 2-thiouridine(34) in tRNA + L-cysteinyl-[protein] + A + AMP + diphosphate + H(+). Its function is as follows. Catalyzes the 2-thiolation of uridine at the wobble position (U34) of tRNA, leading to the formation of s(2)U34. The protein is tRNA-specific 2-thiouridylase MnmA of Clavibacter michiganensis subsp. michiganensis (strain NCPPB 382).